A 59-amino-acid polypeptide reads, in one-letter code: UPF0434 protein VC_1876 (59 aa).

This sequence belongs to the UPF0434 family.

The sequence is that of UPF0434 protein VC_1876 from Vibrio cholerae serotype O1 (strain ATCC 39315 / El Tor Inaba N16961).